The primary structure comprises 197 residues: Histone chaperone asf1b-A (197 aa).

Belongs to the ASF1 family. As to quaternary structure, interacts with histone H3 and histone H4.

The protein resides in the nucleus. Functionally, histone chaperone that facilitates histone deposition and histone exchange and removal during nucleosome assembly and disassembly. This Danio rerio (Zebrafish) protein is Histone chaperone asf1b-A (asf1ba).